The primary structure comprises 167 residues: Small ribosomal subunit protein uS5 (167 aa).

The region spanning 12–75 (LQEKLVQVNR…DAARKNMITV (64 aa)) is the S5 DRBM domain.

The protein belongs to the universal ribosomal protein uS5 family. As to quaternary structure, part of the 30S ribosomal subunit. Contacts proteins S4 and S8.

In terms of biological role, with S4 and S12 plays an important role in translational accuracy. Functionally, located at the back of the 30S subunit body where it stabilizes the conformation of the head with respect to the body. The sequence is that of Small ribosomal subunit protein uS5 from Hahella chejuensis (strain KCTC 2396).